A 222-amino-acid polypeptide reads, in one-letter code: Putative N-acetylmannosamine-6-phosphate 2-epimerase (222 aa).

This sequence belongs to the NanE family.

It catalyses the reaction an N-acyl-D-glucosamine 6-phosphate = an N-acyl-D-mannosamine 6-phosphate. It functions in the pathway amino-sugar metabolism; N-acetylneuraminate degradation; D-fructose 6-phosphate from N-acetylneuraminate: step 3/5. Functionally, converts N-acetylmannosamine-6-phosphate (ManNAc-6-P) to N-acetylglucosamine-6-phosphate (GlcNAc-6-P). The polypeptide is Putative N-acetylmannosamine-6-phosphate 2-epimerase (Staphylococcus aureus (strain bovine RF122 / ET3-1)).